We begin with the raw amino-acid sequence, 309 residues long: uncharacterized protein (309 aa).

The protein to S.pombe SpAC14C4.04.

This is an uncharacterized protein from Schizosaccharomyces pombe (strain 972 / ATCC 24843) (Fission yeast).